We begin with the raw amino-acid sequence, 395 residues long: Testis-expressed protein 44 (395 aa).

Disordered regions lie at residues 1–32 (MALP…PLTA), 46–100 (WQDI…LQVS), 133–215 (KMSQ…SDES), and 235–258 (FPPP…GRRP). The span at 53-65 (SFKTATPRAISTS) shows a compositional bias: polar residues. The segment covering 87-98 (PLLPSQNPSPLQ) has biased composition (low complexity). Residues 192–207 (SAEEKAEHPKAPHPEA) are compositionally biased toward basic and acidic residues. S333 carries the post-translational modification Phosphoserine.

Testis. Detected in germ cells at all stages of the seminiferous epithelium, strong expression in elongating spermatids (at protein level).

It is found in the cytoplasm. The protein is Testis-expressed protein 44 of Homo sapiens (Human).